The sequence spans 312 residues: Probable splicing factor, arginine/serine-rich 1 (312 aa).

Residues 3–73 enclose the RRM 1 domain; that stretch reads ARIYIGRLTS…ERVILDYSKP (71 aa). Disordered stretches follow at residues 69–125 and 196–312; these read DYSK…GRPY and KMID…DGDN. Over residues 74–90 the composition is skewed to gly residues; that stretch reads RGGGGDRGGFGGGGRGG. Residues 103-121 are compositionally biased toward basic and acidic residues; sequence GRDRFDRYDRGPPRRESRY. One can recognise an RRM 2 domain in the interval 129–202; it reads HRVVVENLSS…RKIKMIDDSQ (74 aa). Positions 206 to 259 are enriched in basic residues; the sequence is SRSRSNSRSRSRSRSRDRRRSRSRSSSRSKSRSRSPPKRSRRESKSKSRSRSRS.

This sequence belongs to the splicing factor SR family. In terms of processing, extensively phosphorylated on serine residues in the RS domain.

The protein localises to the nucleus. Its function is as follows. Plays a functionally redundant role in spermatogenesis and growth rate control. This is Probable splicing factor, arginine/serine-rich 1 (rsp-1) from Caenorhabditis elegans.